The primary structure comprises 477 residues: Stromelysin-1 (477 aa).

Positions 1-17 are cleaved as a signal peptide; it reads MKNLPILLLLCVAACSA. A propeptide spans 18–99 (activation peptide); that stretch reads YPLDRSARDE…SRCGVPDVGH (82 aa). The Cysteine switch motif lies at 90-97; sequence SRCGVPDV. C92 provides a ligand contact to Zn(2+). An N-linked (GlcNAc...) asparagine glycan is attached at N120. 2 residues coordinate Ca(2+): D124 and D158. 2 residues coordinate Zn(2+): H168 and D170. The Ca(2+) site is built by D175, G176, G178, and V180. H183 contributes to the Zn(2+) binding site. The Ca(2+) site is built by G190, N192, and D194. H196 contacts Zn(2+). D198, D199, and E201 together coordinate Ca(2+). Position 218 (H218) interacts with Zn(2+). The active site involves E219. The Zn(2+) site is built by H222 and H228. A disordered region spans residues 260–285; sequence QSLYGPPPASPDSPVEPSEPEPPAPG. 4 Hemopexin repeats span residues 287–336, 337–383, 385–433, and 434–477; these read LAMC…WPSL, PSGI…GFPP, VRKI…FPGI, and DSKL…WFNC. A disulfide bond links C290 and C477. D297 lines the Ca(2+) pocket. The Ca(2+) site is built by D389 and D438.

It belongs to the peptidase M10A family. It depends on Ca(2+) as a cofactor. Zn(2+) is required as a cofactor.

The protein localises to the secreted. The protein resides in the extracellular space. Its subcellular location is the extracellular matrix. It catalyses the reaction Preferential cleavage where P1', P2' and P3' are hydrophobic residues.. Functionally, metalloproteinase with a rather broad substrate specificity that can degrade fibronectin, laminin, gelatins of type I, III, IV, and V; collagens III, IV, X, and IX, and cartilage proteoglycans. Activates different molecules including growth factors, plasminogen or other matrix metalloproteinases such as MMP9. Once released into the extracellular matrix (ECM), the inactive pro-enzyme is activated by the plasmin cascade signaling pathway. Also acts intracellularly. For example, in dopaminergic neurons, gets activated by the serine protease HTRA2 upon stress and plays a pivotal role in DA neuronal degeneration by mediating microglial activation and alpha-synuclein/SNCA cleavage. In addition, plays a role in immune response and possesses antiviral activity against various viruses. Mechanistically, translocates from the cytoplasm into the cell nucleus upon virus infection to influence NF-kappa-B activities. This chain is Stromelysin-1 (MMP3), found in Equus caballus (Horse).